We begin with the raw amino-acid sequence, 547 residues long: Phosphomethylpyrimidine synthase (547 aa).

Residues asparagine 150, methionine 179, tyrosine 208, histidine 244, 264–266, 305–308, and glutamate 344 contribute to the substrate site; these read SRG and DGLR. Histidine 348 contacts Zn(2+). Tyrosine 371 provides a ligand contact to substrate. Histidine 412 provides a ligand contact to Zn(2+). [4Fe-4S] cluster is bound by residues cysteine 492, cysteine 495, and cysteine 500.

It belongs to the ThiC family. [4Fe-4S] cluster serves as cofactor.

It catalyses the reaction 5-amino-1-(5-phospho-beta-D-ribosyl)imidazole + S-adenosyl-L-methionine = 4-amino-2-methyl-5-(phosphooxymethyl)pyrimidine + CO + 5'-deoxyadenosine + formate + L-methionine + 3 H(+). Its pathway is cofactor biosynthesis; thiamine diphosphate biosynthesis. Its function is as follows. Catalyzes the synthesis of the hydroxymethylpyrimidine phosphate (HMP-P) moiety of thiamine from aminoimidazole ribotide (AIR) in a radical S-adenosyl-L-methionine (SAM)-dependent reaction. The protein is Phosphomethylpyrimidine synthase of Nocardia farcinica (strain IFM 10152).